A 145-amino-acid chain; its full sequence is 3-hydroxyacyl-[acyl-carrier-protein] dehydratase FabZ (145 aa).

The active site involves H49.

The protein belongs to the thioester dehydratase family. FabZ subfamily.

The protein localises to the cytoplasm. It carries out the reaction a (3R)-hydroxyacyl-[ACP] = a (2E)-enoyl-[ACP] + H2O. Functionally, involved in unsaturated fatty acids biosynthesis. Catalyzes the dehydration of short chain beta-hydroxyacyl-ACPs and long chain saturated and unsaturated beta-hydroxyacyl-ACPs. The protein is 3-hydroxyacyl-[acyl-carrier-protein] dehydratase FabZ of Rickettsia africae (strain ESF-5).